We begin with the raw amino-acid sequence, 290 residues long: Acetyl-coenzyme A carboxylase carboxyl transferase subunit beta (290 aa).

The CoA carboxyltransferase N-terminal domain occupies Leu27 to Ala290. The Zn(2+) site is built by Cys31, Cys34, Cys50, and Cys53. The C4-type zinc-finger motif lies at Cys31–Cys53.

This sequence belongs to the AccD/PCCB family. Acetyl-CoA carboxylase is a heterohexamer composed of biotin carboxyl carrier protein (AccB), biotin carboxylase (AccC) and two subunits each of ACCase subunit alpha (AccA) and ACCase subunit beta (AccD). Zn(2+) is required as a cofactor.

It is found in the cytoplasm. It carries out the reaction N(6)-carboxybiotinyl-L-lysyl-[protein] + acetyl-CoA = N(6)-biotinyl-L-lysyl-[protein] + malonyl-CoA. It participates in lipid metabolism; malonyl-CoA biosynthesis; malonyl-CoA from acetyl-CoA: step 1/1. Its function is as follows. Component of the acetyl coenzyme A carboxylase (ACC) complex. Biotin carboxylase (BC) catalyzes the carboxylation of biotin on its carrier protein (BCCP) and then the CO(2) group is transferred by the transcarboxylase to acetyl-CoA to form malonyl-CoA. In Cupriavidus taiwanensis (strain DSM 17343 / BCRC 17206 / CCUG 44338 / CIP 107171 / LMG 19424 / R1) (Ralstonia taiwanensis (strain LMG 19424)), this protein is Acetyl-coenzyme A carboxylase carboxyl transferase subunit beta.